The chain runs to 555 residues: 5'-nucleotidase-related protein (555 aa).

Residues 1–25 (MKSLIGTLGLYCLFILTNNVVSSYG) form the signal peptide. A divalent metal cation is bound by residues aspartate 38, histidine 40, and aspartate 91. N-linked (GlcNAc...) asparagine glycosylation occurs at asparagine 105. Asparagine 123 lines the a divalent metal cation pocket. N-linked (GlcNAc...) asparagine glycosylation is present at asparagine 198. A divalent metal cation is bound by residues histidine 225 and histidine 249. N-linked (GlcNAc...) asparagine glycosylation is present at asparagine 295. AMP-binding residues include arginine 358, arginine 402, and phenylalanine 421. The N-linked (GlcNAc...) asparagine glycan is linked to asparagine 465. Phenylalanine 505 and aspartate 511 together coordinate AMP.

This sequence belongs to the 5'-nucleotidase family. Mg(2+) is required as a cofactor. It depends on Mn(2+) as a cofactor. In terms of tissue distribution, salivary gland (at protein level). Saliva (at protein level).

The protein resides in the secreted. The enzyme catalyses a ribonucleoside 5'-triphosphate + 2 H2O = a ribonucleoside 5'-phosphate + 2 phosphate + 2 H(+). With respect to regulation, DEPC (2 mM), sodium fluoride (10 mM) and 4,4'-Diisothiocyano-2,2'-stilbenedisulfonic acid (DIDS, 100 uM) nearly completely abrogate activity. Concanavalin A enhances activity. Facilitates hematophagy by inhibiting ADP-dependent platelet aggregation and promoting disaggregation of ADP-stimulated platelets in the host. Cleaves adenosine triphosphate (ATP) and adenosine diphosphate (ADP) to adenosine monophosphate (AMP) and inorganic phosphate. Interacts with fibrinogen receptor integrin alpha-IIb/beta-3 (ITGA2B/ITGB3). In Glossina morsitans morsitans (Savannah tsetse fly), this protein is 5'-nucleotidase-related protein.